The sequence spans 82 residues: Putative antitoxin VapB23 (82 aa).

In terms of biological role, putative antitoxin component of a possible type II toxin-antitoxin (TA) system. The cognate toxin is VapC23. The protein is Putative antitoxin VapB23 (vapB23) of Mycobacterium tuberculosis (strain ATCC 25618 / H37Rv).